The chain runs to 314 residues: Zinc transporter ZIP3 (314 aa).

Residues 1–3 (MNL) are Extracellular-facing. The helical transmembrane segment at 4 to 24 (IFAKVLCLLAILVLMMLGSLI) threads the bilayer. Residues 25 to 41 (PVKISEADFDKSSRSRK) lie on the Cytoplasmic side of the membrane. Residues 42–62 (ILSLSNSFAGGVFLATCFNAL) traverse the membrane as a helical segment. The Extracellular portion of the chain corresponds to 63–84 (LPAVREKFFDLLKIGNISTDYP). Residues 85–105 (LAETIMMVGFFLTVFVEQTVM) traverse the membrane as a helical segment. The Cytoplasmic portion of the chain corresponds to 106–169 (TFRKEKPSFI…KELSSSSPIR (64 aa)). The helical transmembrane segment at 170-190 (LFSLVFALSAHSVFEGLALGL) threads the bilayer. At 191–196 (QEDGNK) the chain is on the extracellular side. A helical membrane pass occupies residues 197–217 (LLSLFIGVVIHETLVAMALGV). Residues 218–229 (SMAKVNTHLKDA) lie on the Cytoplasmic side of the membrane. A helical membrane pass occupies residues 230-250 (IKMAVLVSTMIPIGIVVGMAI). At 251–262 (QSAQNMASSIAS) the chain is on the extracellular side. The helical transmembrane segment at 263 to 283 (ALLQGIAGGTFIFVTFFEILV) threads the bilayer. The Cytoplasmic segment spans residues 284-292 (KELEEKNDR). A helical transmembrane segment spans residues 293–313 (LLKVLFLVLGYTVLAVLVLFK). Residue Trp-314 is a topological domain, extracellular.

This sequence belongs to the ZIP transporter (TC 2.A.5) family.

It localises to the cell membrane. The protein resides in the apical cell membrane. The catalysed reaction is Zn(2+)(in) = Zn(2+)(out). Functionally, transporter for the divalent cation Zn(2+). Mediates the influx of Zn(2+) into cells from extracellular space. The polypeptide is Zinc transporter ZIP3 (slc39a3) (Xenopus tropicalis (Western clawed frog)).